Here is a 1341-residue protein sequence, read N- to C-terminus: uncharacterized protein (1341 aa).

The segment at residues 41–68 (CLLCRRRKQRCDHKLPSCTACLKAGIKC) is a DNA-binding region (zn(2)-C6 fungal-type). 5 stretches are compositionally biased toward low complexity: residues 72 to 93 (SKYS…AGTV), 779 to 791 (SNSA…SNSN), 864 to 906 (SNSS…NDNN), 920 to 967 (NHNN…GNNS), and 1036 to 1050 (SPSK…SSHS). Disordered regions lie at residues 72–100 (SKYS…PHPV), 770–804 (ISSG…MPPA), 864–971 (SNSS…QYVR), and 1031–1116 (TMTN…NSNP). The span at 1057–1076 (MTQSPTPYPQTSNMLPQQHV) shows a compositional bias: polar residues. Over residues 1078–1090 (RPLPQQQREQPQQ) the composition is skewed to low complexity. Residues 1091–1116 (HITSPQRFSESNFTNQLNNGMINSNP) show a composition bias toward polar residues. Ser1143 is subject to Phosphoserine. The segment covering 1220-1230 (SQEPSSLSMDK) has biased composition (polar residues). Residues 1220 to 1240 (SQEPSSLSMDKQQQQHQQQNM) are disordered.

The protein localises to the nucleus. This is an uncharacterized protein from Saccharomyces cerevisiae (strain ATCC 204508 / S288c) (Baker's yeast).